We begin with the raw amino-acid sequence, 330 residues long: Beta-ketoacyl-[acyl-carrier-protein] synthase III (330 aa).

Active-site residues include cysteine 115 and histidine 255. Residues 256 to 260 (QANFR) form an ACP-binding region. Residue asparagine 285 is part of the active site.

It belongs to the thiolase-like superfamily. FabH family. As to quaternary structure, homodimer.

It is found in the cytoplasm. The enzyme catalyses malonyl-[ACP] + acetyl-CoA + H(+) = 3-oxobutanoyl-[ACP] + CO2 + CoA. Its pathway is lipid metabolism; fatty acid biosynthesis. In terms of biological role, catalyzes the condensation reaction of fatty acid synthesis by the addition to an acyl acceptor of two carbons from malonyl-ACP. Catalyzes the first condensation reaction which initiates fatty acid synthesis and may therefore play a role in governing the total rate of fatty acid production. Possesses both acetoacetyl-ACP synthase and acetyl transacylase activities. Its substrate specificity determines the biosynthesis of branched-chain and/or straight-chain of fatty acids. The sequence is that of Beta-ketoacyl-[acyl-carrier-protein] synthase III from Helicobacter pylori (strain P12).